Here is a 247-residue protein sequence, read N- to C-terminus: Proteasome subunit alpha (247 aa).

The protein belongs to the peptidase T1A family. As to quaternary structure, the 20S proteasome core is composed of 14 alpha and 14 beta subunits that assemble into four stacked heptameric rings, resulting in a barrel-shaped structure. The two inner rings, each composed of seven catalytic beta subunits, are sandwiched by two outer rings, each composed of seven alpha subunits. The catalytic chamber with the active sites is on the inside of the barrel. Has a gated structure, the ends of the cylinder being occluded by the N-termini of the alpha-subunits. Is capped at one or both ends by the proteasome regulatory ATPase, PAN.

The protein localises to the cytoplasm. With respect to regulation, the formation of the proteasomal ATPase PAN-20S proteasome complex, via the docking of the C-termini of PAN into the intersubunit pockets in the alpha-rings, triggers opening of the gate for substrate entry. Interconversion between the open-gate and close-gate conformations leads to a dynamic regulation of the 20S proteasome proteolysis activity. Its function is as follows. Component of the proteasome core, a large protease complex with broad specificity involved in protein degradation. This chain is Proteasome subunit alpha, found in Methanosarcina acetivorans (strain ATCC 35395 / DSM 2834 / JCM 12185 / C2A).